A 634-amino-acid polypeptide reads, in one-letter code: Sodium-dependent neutral amino acid transporter B(0)AT1 (634 aa).

The Cytoplasmic portion of the chain corresponds to 1–41 (MVRLVLPNPGLDTRILSLAELETIEQEEASSRPKWDNKAQY). A Phosphoserine modification is found at S17. Residues 42 to 62 (LLTCVGFCVGLGNVWRFPYLC) form a helical membrane-spanning segment. Topologically, residues 63-65 (QSH) are extracellular. The chain crosses the membrane as a helical span at residues 66-86 (GGGAFMIPFLILLVLEGIPLL). Residues 87-120 (HLEFAIGQRLRRGSLGVWSSIHPALKGVGLTSML) lie on the Cytoplasmic side of the membrane. The chain crosses the membrane as a helical span at residues 121–141 (VSFVVGLYYNTIISWIMWYLF). Over 142–192 (NSFQEPLPWSECPLNENQTGYVDECARSSPVDYFWYRETLNISTSISDSGS) the chain is Extracellular. N-linked (GlcNAc...) asparagine glycosylation is found at N158 and N182. Residues 193 to 213 (IQWRMLLCLACAWSVLYMCTI) traverse the membrane as a helical segment. Topologically, residues 214-221 (RGIETTGK) are cytoplasmic. The helical transmembrane segment at 222–242 (VVYITSTLPYVVLTIFLIRGL) threads the bilayer. Residues 243 to 268 (TLKGATKGIIYLFTPNVTELANPVTW) lie on the Extracellular side of the membrane. Residue N258 is glycosylated (N-linked (GlcNAc...) asparagine). A helical membrane pass occupies residues 269–289 (LDAGAQVFFSFSLAFGGLISF). At 290–304 (SSYNSVHNNCERDSV) the chain is on the cytoplasmic side. Residues 305–325 (IVSIINGFTSVYVAIVIYSII) traverse the membrane as a helical segment. The Extracellular segment spans residues 326-413 (GFRATQRYDD…TEAITKMPVS (88 aa)). Residues N354 and N368 are each glycosylated (N-linked (GlcNAc...) asparagine). A helical transmembrane segment spans residues 414-434 (PLWSVLFFIMLFCLGLSSMFG). At 435-456 (NMEGVVVPLQDLKVIPPKWPKE) the chain is on the cytoplasmic side. A helical membrane pass occupies residues 457–477 (LLTGLICLGTFLIGFIFTLNS). The Extracellular portion of the chain corresponds to 478–487 (GQYWLSLLDS). Residues 488-508 (YAVSIPLLIIAFCEMFSVVYV) form a helical membrane-spanning segment. Residues 509-531 (YGVDRFNKDIEFMIGHKPNIFWQ) lie on the Cytoplasmic side of the membrane. A helical transmembrane segment spans residues 532 to 552 (VTWRVVSPLLMLIILVFFFVV). The Extracellular segment spans residues 553-581 (QVSQELTYSIWNPGYEEFPKSQKISHPNW). A helical transmembrane segment spans residues 582 to 602 (VYAVVVIVAGVPSLTIPSYAI). Topologically, residues 603 to 634 (YKLIRNCCQKPGDRQGLVSTLSTASMNGDLKY) are cytoplasmic. S627 is modified (phosphoserine).

Belongs to the sodium:neurotransmitter symporter (SNF) (TC 2.A.22) family. SLC6A19 subfamily. As to quaternary structure, interacts in a tissue-specific manner with ACE2 in small intestine and with CLTRN in the kidney. Interacts with CLTRN; this interaction is required for trafficking of SLC6A19 to the plasma membrane and for its catalytic activation in kidneys. Interacts with ACE2; this interaction is required for trafficking of SLC6A19 to the plasma membrane and for its catalytic activation in intestine. Interacts with ANPEP; the interaction positively regulates its amino acid transporter activity.

It is found in the membrane. It carries out the reaction L-alanine(in) + Na(+)(in) = L-alanine(out) + Na(+)(out). The enzyme catalyses L-cysteine(in) + Na(+)(in) = L-cysteine(out) + Na(+)(out). It catalyses the reaction L-glutamine(in) + Na(+)(in) = L-glutamine(out) + Na(+)(out). The catalysed reaction is glycine(in) + Na(+)(in) = glycine(out) + Na(+)(out). It carries out the reaction L-isoleucine(in) + Na(+)(in) = L-isoleucine(out) + Na(+)(out). The enzyme catalyses L-leucine(in) + Na(+)(in) = L-leucine(out) + Na(+)(out). It catalyses the reaction L-methionine(in) + Na(+)(in) = L-methionine(out) + Na(+)(out). The catalysed reaction is L-phenylalanine(in) + Na(+)(in) = L-phenylalanine(out) + Na(+)(out). It carries out the reaction L-serine(in) + Na(+)(in) = L-serine(out) + Na(+)(out). The enzyme catalyses L-tryptophan(in) + Na(+)(in) = L-tryptophan(out) + Na(+)(out). It catalyses the reaction L-tyrosine(in) + Na(+)(in) = L-tyrosine(out) + Na(+)(out). The catalysed reaction is L-valine(in) + Na(+)(in) = L-valine(out) + Na(+)(out). Its function is as follows. Transporter that mediates resorption of neutral amino acids across the apical membrane of renal and intestinal epithelial cells. This uptake is sodium-dependent and chloride-independent. Requires CLTRN in kidney or ACE2 in intestine for cell surface expression and amino acid transporter activity. This Pongo abelii (Sumatran orangutan) protein is Sodium-dependent neutral amino acid transporter B(0)AT1 (SLC6A19).